The sequence spans 120 residues: UPF0102 protein COXBURSA331_A1934 (120 aa).

This sequence belongs to the UPF0102 family.

This chain is UPF0102 protein COXBURSA331_A1934, found in Coxiella burnetii (strain RSA 331 / Henzerling II).